The chain runs to 241 residues: Geranylgeranylglyceryl phosphate synthase (241 aa).

Positions 26 and 52 each coordinate Mg(2+). Sn-glycerol 1-phosphate contacts are provided by residues 172–178 (YFEAGSG), 204–205 (GG), and 226–227 (GT).

This sequence belongs to the GGGP/HepGP synthase family. Group II subfamily. Mg(2+) serves as cofactor.

The protein localises to the cytoplasm. It catalyses the reaction sn-glycerol 1-phosphate + (2E,6E,10E)-geranylgeranyl diphosphate = sn-3-O-(geranylgeranyl)glycerol 1-phosphate + diphosphate. Its pathway is membrane lipid metabolism; glycerophospholipid metabolism. In terms of biological role, prenyltransferase that catalyzes the transfer of the geranylgeranyl moiety of geranylgeranyl diphosphate (GGPP) to the C3 hydroxyl of sn-glycerol-1-phosphate (G1P). This reaction is the first ether-bond-formation step in the biosynthesis of archaeal membrane lipids. The protein is Geranylgeranylglyceryl phosphate synthase of Hyperthermus butylicus (strain DSM 5456 / JCM 9403 / PLM1-5).